A 568-amino-acid chain; its full sequence is Archaeosine synthase subunit alpha (568 aa).

Positions 496–565 constitute a PUA domain; that stretch reads YDALKSYWVK…AKKGVAVKVR (70 aa).

It belongs to the archaeosine synthase type 1 family. As to quaternary structure, forms a robust complex with the archaeosine synthase beta subunit RaSEA, likely an alpha(2)beta(2) heterotetrameric structure. Formation of this complex highly increases lysine transfer activity.

The enzyme catalyses 7-cyano-7-carbaguanosine(15) in tRNA + L-lysine = 7-N-[(5S)-5-amino-5-carboxypentyl]formamidino-7-deazaguanosine(15) in tRNA. The protein operates within tRNA modification; archaeosine-tRNA biosynthesis. Functionally, functions in the biosynthesis of archaeosine, a modified nucleoside present in the dihydrouridine loop (D-loop) of archaeal tRNAs. Catalyzes the addition of L-lysine to the cyano group of 7-cyano-7-deazaguanine (preQ0)-modified tRNAs at position 15, to generate q0kN15-tRNA, a q0N lysine adduct identified as 7-N-[(5S)-5-amino-5-carboxypentyl]formamidino-7-deazaguanosine. The protein is Archaeosine synthase subunit alpha of Thermococcus kodakarensis (strain ATCC BAA-918 / JCM 12380 / KOD1) (Pyrococcus kodakaraensis (strain KOD1)).